Consider the following 446-residue polypeptide: MPALPILALALAPLLVNGQLSGSVGPLTSAHSKAATKTCNVLDYGAVADNSTDIGSALSEAWDACSDGGLIYIPPGDYAMDTWVSLSGGKATAIILDGTIYRTGTDGGNMILVENSSDFELYSNSSSGAVQGFGYVYHREGDLDGPRILRLQDVSNFAVHDIILVDAPAFHFVMDDCSDGEVYNMAIRGGNSGGLDGIDVWGSNIWVHDVEVTNKDECVTVKSPANNILVESIYCNWSGGCAMGSLGADTDITDILYRNVYTWSSNQMYMIKSNGGSGTVNNTVLENFIGHGNAYSLDVDSYWSSMTAVDGDGVQLSNITFKNWKGTEADGAERGPIKVVCSDTAPCTDITIEDFAMWTESGDEQTYTCESAYGDGFCLEDSDSTTSYTTTQTVTTAPSGYSATTMAADLTTDFGTTASIPIPTIPTSFYPGLTAISPLASAATTA.

The N-terminal stretch at 1–18 (MPALPILALALAPLLVNG) is a signal peptide. Cysteine 39 and cysteine 65 are joined by a disulfide. Residues asparagine 50, asparagine 115, and asparagine 124 are each glycosylated (N-linked (GlcNAc...) asparagine). Aspartate 216 (proton donor) is an active-site residue. A disulfide bridge links cysteine 218 with cysteine 235. Residues asparagine 236 and asparagine 281 are each glycosylated (N-linked (GlcNAc...) asparagine). Histidine 291 is an active-site residue. Asparagine 318 carries N-linked (GlcNAc...) asparagine glycosylation. Cystine bridges form between cysteine 341-cysteine 347 and cysteine 369-cysteine 378.

Belongs to the glycosyl hydrolase 28 family.

It localises to the secreted. It catalyses the reaction Endohydrolysis of alpha-D-GalA-(1-&gt;2)-alpha-L-Rha glycosidic bond in the rhamnogalacturonan I backbone with initial inversion of anomeric configuration releasing oligosaccharides with beta-D-GalA at the reducing end.. Functionally, pectinolytic enzymes consist of four classes of enzymes: pectine lyase, polygalacturonase, pectin methylesterase and rhamnogalacturonase. Hydrolyzes alpha-D-galacturonopyranosyl-(1,2)-alpha-L-rhamnopyranosyl linkages in the backbone of the hairy regions of pectins. The sequence is that of Probable rhamnogalacturonase A (rhgA) from Aspergillus niger (strain ATCC MYA-4892 / CBS 513.88 / FGSC A1513).